The following is a 151-amino-acid chain: MFRGANAINLDAKGRLAMPSRYRDELDSRSAGQMIVTIDAVDPCLCLYPLSEWELIEAKLRDLATFREENRRLQRLLIGNAVDLELDGSGRFLVPPRLREYARLDKRVMLVGQLNKFQLWDEDAWNALADADLAAIQKPGAMPDELRDLIL.

SpoVT-AbrB domains follow at residues 5 to 52 and 81 to 124; these read ANAI…PLSE and AVDL…DEDA.

The protein belongs to the MraZ family. As to quaternary structure, forms oligomers.

The protein resides in the cytoplasm. The protein localises to the nucleoid. In Pseudomonas syringae pv. tomato (strain ATCC BAA-871 / DC3000), this protein is Transcriptional regulator MraZ.